The chain runs to 315 residues: Homoserine kinase (315 aa).

97-107 (PPARGLGSSAT) provides a ligand contact to ATP.

It belongs to the GHMP kinase family. Homoserine kinase subfamily.

The protein resides in the cytoplasm. The catalysed reaction is L-homoserine + ATP = O-phospho-L-homoserine + ADP + H(+). Its pathway is amino-acid biosynthesis; L-threonine biosynthesis; L-threonine from L-aspartate: step 4/5. In terms of biological role, catalyzes the ATP-dependent phosphorylation of L-homoserine to L-homoserine phosphate. The sequence is that of Homoserine kinase from Synechococcus sp. (strain CC9902).